The primary structure comprises 376 residues: Heat-inducible transcription repressor HrcA (376 aa).

It belongs to the HrcA family.

In terms of biological role, negative regulator of class I heat shock genes (grpE-dnaK-dnaJ and groELS operons). Prevents heat-shock induction of these operons. The chain is Heat-inducible transcription repressor HrcA from Nostoc punctiforme (strain ATCC 29133 / PCC 73102).